We begin with the raw amino-acid sequence, 974 residues long: Cell division control protein 15 (974 aa).

Residues 25-272 (YHLKQVIGRG…ADQLLKHVWI (248 aa)) form the Protein kinase domain. Residues 31-39 (IGRGSYGVV) and lysine 54 contribute to the ATP site. Residue aspartate 146 is the Proton acceptor of the active site. The interval 360 to 702 (CSLENIADTI…ITAICVEMSL (343 aa)) is self association domain. Residues 554 to 563 (SSSLPLSSSP) are compositionally biased toward low complexity. Residues 554–592 (SSSLPLSSSPTRNSPVNSVQSPSRSPVHSLMATRPSSPM) are disordered. A phosphoserine mark is found at serine 561 and serine 567. Residues 564–579 (TRNSPVNSVQSPSRSP) are compositionally biased toward polar residues. Residues 751-974 (TVGSSESHSV…FSVPITTFQT (224 aa)) form an auto-inhibitory domain region. Residue threonine 870 is modified to Phosphothreonine. The segment at 941 to 974 (AAIGSSPTKDERSNLRSSKDKSDGFSVPITTFQT) is disordered. The span at 948–963 (TKDERSNLRSSKDKSD) shows a compositional bias: basic and acidic residues.

This sequence belongs to the protein kinase superfamily. Ser/Thr protein kinase family. Homodimer. Interacts with TEM1. In terms of processing, phosphorylation by CDK1 reduces the binding to the mother spindle pole body. The extent of phosphorylation gradually increases during cell-cycle progression until some point during late anaphase/telophase when it is rapidly dephosphorylated by CDC14. Phosphorylation inhibits kinase activity and dephosphorylation by CDC14 activates CDC15.

The protein localises to the cytoplasm. The protein resides in the cytoskeleton. It localises to the spindle pole. It is found in the bud neck. The enzyme catalyses L-seryl-[protein] + ATP = O-phospho-L-seryl-[protein] + ADP + H(+). It carries out the reaction L-threonyl-[protein] + ATP = O-phospho-L-threonyl-[protein] + ADP + H(+). Kinase activity is inhibited by phosphorylation and activated by dephosphorylation by CDC14. In terms of biological role, protein kinase of the mitotic exit network (MEN) essential for late nuclear division in the mitotic cycle. Promotes mitotic exit by phosphorylating DBF2 and directly switching on DBF2 kinase activity. Involved in the localization of DBF2 and DBF20 to the neck which is necessary to undergo cytokinesis. Plays a role in segregation of chromosomes during recovery from spindle checkpoint activation. Required for spindle pole localization of CDK1 and inactivation of CDC2 kinase activity at the end of mitosis. Required for spindle disassembly after meiosis II and plays a role in spore morphogenesis. The polypeptide is Cell division control protein 15 (CDC15) (Saccharomyces cerevisiae (strain ATCC 204508 / S288c) (Baker's yeast)).